A 466-amino-acid polypeptide reads, in one-letter code: Uridine kinase-like protein 3 (466 aa).

Residues 41-246 form a uridine kinase region; sequence HGQPFVIGVA…IVQHIHTKLG (206 aa). The segment at 256–466 is uracil phosphoribosyltransferase; sequence NLYVIQSTFQ…GDRYFGTDDE (211 aa). GTP is bound by residues Lys-280, Arg-289, and 323 to 326; that span reads CKKL. 5-phospho-alpha-D-ribose 1-diphosphate is bound by residues Arg-333 and Arg-358. Residue Arg-378 participates in GTP binding. 5-phospho-alpha-D-ribose 1-diphosphate-binding positions include Asp-384, 389–392, and Glu-455; that span reads TGNS. 454–456 serves as a coordination point for uracil; it reads GEF.

It in the N-terminal section; belongs to the uridine kinase family. The protein in the C-terminal section; belongs to the UPRTase family. It depends on Mg(2+) as a cofactor.

It carries out the reaction UMP + diphosphate = 5-phospho-alpha-D-ribose 1-diphosphate + uracil. The catalysed reaction is cytidine + ATP = CMP + ADP + H(+). It catalyses the reaction uridine + ATP = UMP + ADP + H(+). Its pathway is pyrimidine metabolism; UMP biosynthesis via salvage pathway; UMP from uracil: step 1/1. The protein operates within pyrimidine metabolism; CTP biosynthesis via salvage pathway; CTP from cytidine: step 1/3. It functions in the pathway pyrimidine metabolism; UMP biosynthesis via salvage pathway; UMP from uridine: step 1/1. With respect to regulation, allosterically activated by GTP. In terms of biological role, involved in the pyrimidine salvage pathway. The uracil phosphoribosyltransferase (UPRT) activity, that catalyzes the conversion of uracil and 5-phospho-alpha-D-ribose 1-diphosphate (PRPP) to UMP and diphosphate, is unsure. The chain is Uridine kinase-like protein 3 (UKL3) from Arabidopsis thaliana (Mouse-ear cress).